The chain runs to 673 residues: DNA ligase (673 aa).

NAD(+) contacts are provided by residues 35–39, 84–85, and E115; these read DAEYD and SL. K117 acts as the N6-AMP-lysine intermediate in catalysis. NAD(+) is bound by residues R138, E175, K292, and K316. Residues C410, C413, C428, and C434 each contribute to the Zn(2+) site. The 82-residue stretch at 592–673 folds into the BRCT domain; it reads PRKLPLQGLV…FLDLLERGRP (82 aa).

It belongs to the NAD-dependent DNA ligase family. LigA subfamily. Mg(2+) serves as cofactor. The cofactor is Mn(2+).

It carries out the reaction NAD(+) + (deoxyribonucleotide)n-3'-hydroxyl + 5'-phospho-(deoxyribonucleotide)m = (deoxyribonucleotide)n+m + AMP + beta-nicotinamide D-nucleotide.. In terms of biological role, DNA ligase that catalyzes the formation of phosphodiester linkages between 5'-phosphoryl and 3'-hydroxyl groups in double-stranded DNA using NAD as a coenzyme and as the energy source for the reaction. It is essential for DNA replication and repair of damaged DNA. The polypeptide is DNA ligase (Methylococcus capsulatus (strain ATCC 33009 / NCIMB 11132 / Bath)).